The chain runs to 120 residues: NAD(P)H-quinone oxidoreductase subunit 3 (120 aa).

Transmembrane regions (helical) follow at residues 10-30 (FLGF…TNLI), 64-84 (MFAL…PWAV), and 89-109 (LGLL…IALA).

Belongs to the complex I subunit 3 family. NDH-1 can be composed of about 15 different subunits; different subcomplexes with different compositions have been identified which probably have different functions.

The protein localises to the cellular thylakoid membrane. It carries out the reaction a plastoquinone + NADH + (n+1) H(+)(in) = a plastoquinol + NAD(+) + n H(+)(out). It catalyses the reaction a plastoquinone + NADPH + (n+1) H(+)(in) = a plastoquinol + NADP(+) + n H(+)(out). NDH-1 shuttles electrons from an unknown electron donor, via FMN and iron-sulfur (Fe-S) centers, to quinones in the respiratory and/or the photosynthetic chain. The immediate electron acceptor for the enzyme in this species is believed to be plastoquinone. Couples the redox reaction to proton translocation, and thus conserves the redox energy in a proton gradient. Cyanobacterial NDH-1 also plays a role in inorganic carbon-concentration. The protein is NAD(P)H-quinone oxidoreductase subunit 3 of Prochlorococcus marinus (strain MIT 9312).